A 461-amino-acid chain; its full sequence is Smoothelin-like protein 2 (461 aa).

Residues 55–88 (PLARTVADLQRDNQRLQAQLERLTRQVEALGLAS) are a coiled coil. 2 disordered regions span residues 87–193 (ASGM…LRLP) and 227–248 (LNPS…KNSS). The segment covering 94-107 (PGTPGTPSPPPAPG) has biased composition (pro residues). Thr-96 carries the phosphothreonine modification. Phosphoserine occurs at positions 101, 129, and 134. Residues 134-147 (SLDHDEASESEMRK) show a composition bias toward basic and acidic residues. 2 positions are modified to phosphoserine: Ser-256 and Ser-269. The interval 260–307 (AVTASKHSNSPPLVTPPQSPVSPQPPAITQVHRQGERRRELVRSQTLP) is disordered. Pro residues predominate over residues 272–285 (LVTPPQSPVSPQPP). Thr-274 bears the Phosphothreonine mark. Residue Ser-278 is modified to Phosphoserine. The segment covering 292–301 (RQGERRRELV) has biased composition (basic and acidic residues). Residue Ser-344 is modified to Phosphoserine. The 108-residue stretch at 351 to 458 (SSIKQILLEW…YVQSLYNHLR (108 aa)) folds into the Calponin-homology (CH) domain.

This sequence belongs to the smoothelin family.

The protein is Smoothelin-like protein 2 (SMTNL2) of Homo sapiens (Human).